The chain runs to 120 residues: Large ribosomal subunit protein uL18 (120 aa).

The protein belongs to the universal ribosomal protein uL18 family. Part of the 50S ribosomal subunit; part of the 5S rRNA/L5/L18/L25 subcomplex. Contacts the 5S and 23S rRNAs.

Its function is as follows. This is one of the proteins that bind and probably mediate the attachment of the 5S RNA into the large ribosomal subunit, where it forms part of the central protuberance. This chain is Large ribosomal subunit protein uL18, found in Staphylococcus epidermidis (strain ATCC 35984 / DSM 28319 / BCRC 17069 / CCUG 31568 / BM 3577 / RP62A).